The chain runs to 96 residues: Small ribosomal subunit protein bS6 (96 aa).

It belongs to the bacterial ribosomal protein bS6 family.

Binds together with bS18 to 16S ribosomal RNA. This chain is Small ribosomal subunit protein bS6, found in Streptococcus equi subsp. zooepidemicus (strain MGCS10565).